Here is a 225-residue protein sequence, read N- to C-terminus: 2-amino-5-formylamino-6-ribosylaminopyrimidin-4(3H)-one 5'-monophosphate deformylase (225 aa).

Fe cation-binding residues include E28, H30, D39, and H107.

This sequence belongs to the creatininase superfamily. FAPy deformylase family. As to quaternary structure, homodimer. It depends on Fe(2+) as a cofactor. The cofactor is Zn(2+).

It catalyses the reaction 2-amino-5-formylamino-6-(5-phospho-D-ribosylamino)pyrimidin-4(3H)-one + H2O = 2,5-diamino-6-(1-D-ribosylamino)pyrimidin-4(3H)-one 5'-phosphate + formate + H(+). The protein operates within cofactor biosynthesis; coenzyme F420 biosynthesis. It participates in cofactor biosynthesis; riboflavin biosynthesis. Catalyzes the hydrolysis of the formamide of 2-amino-5-formylamino-6-ribosylamino-4(3H)-pyrimidinone 5'-monophosphate (FAPy) to form 2,5-diamino-6-ribosylamino-4(3H)-pyrimidinone 5'-phosphate (APy). The chain is 2-amino-5-formylamino-6-ribosylaminopyrimidin-4(3H)-one 5'-monophosphate deformylase from Methanocaldococcus sp. (strain FS406-22).